Here is a 548-residue protein sequence, read N- to C-terminus: LDL receptor repeat-containing protein egg-2 (548 aa).

Residues 1–49 (MSQQAGNAQRGRFDEEPMSLGEKISHRMDQLKEIVSSSCPCAGKFPPVA) are Cytoplasmic-facing. The chain crosses the membrane as a helical; Signal-anchor for type II membrane protein span at residues 50–70 (IVLIVALIILGVIIAVPLVIF). Residues 71–548 (LSPSAQAMSS…LALKNSGLRP (478 aa)) lie on the Extracellular side of the membrane. Asn-119 is a glycosylation site (N-linked (GlcNAc...) asparagine). LDL-receptor class A domains are found at residues 122–160 (TCSGFGFACTGSIDMIIPSSKRCDGLKDCSDGSDEENCK), 161–213 (ECQS…ASCR), 215–252 (KCSKDQFKCSGSDACLPISVKCDGVSDCENESDESNCN), 253–288 (KCQKGAHKCGKNCIKASKVCDGIPDCDDGSDEHQCD), 291–328 (TCSGSEKALCEDGTCIMRSQVCDGKHDCLDGIDEENCP), 370–412 (KCDP…KKCT), 416–454 (ECVVESSIQFTCDNKCLESSRRCDGVWDCEDKSDEKGCD), and 455–492 (KCPSRSFKCSADKKCLPFHTRCNGVAECSDGSDEHKCS). Intrachain disulfides connect Cys-130–Cys-150, Cys-144–Cys-159, Cys-162–Cys-190, Cys-168–Cys-203, Cys-197–Cys-212, Cys-216–Cys-229, Cys-223–Cys-242, Cys-236–Cys-251, Cys-254–Cys-265, Cys-261–Cys-278, Cys-272–Cys-287, Cys-292–Cys-305, Cys-300–Cys-318, Cys-312–Cys-327, Cys-371–Cys-389, Cys-379–Cys-402, Cys-396–Cys-411, Cys-417–Cys-431, Cys-427–Cys-444, Cys-438–Cys-453, Cys-456–Cys-469, Cys-463–Cys-482, and Cys-476–Cys-491. An N-linked (GlcNAc...) asparagine glycan is attached at Asn-244. A glycan (N-linked (GlcNAc...) asparagine) is linked at Asn-527.

The protein localises to the cell membrane. It is found in the endosome membrane. Functionally, probable receptor which is required for the oocyte-to-zygote transition although its exact function is controversial. Redundantly with egg-1, seems to be required for fertilization probably by promoting the interaction or fusion between sperm and oocyte. Conversely, shown to be dispensable for fertilization but required together with egg-1 for the formation of a continuous and cohesive eggshell chitin layer by maintaining a homogenous distribution of chitin synthase chs-1 at the unfertilized oocyte cell membrane. Appears to recruit or maintain together to the unfertilized oocyte cortex several proteins including chs-1, kinase mbk-2 and pseudophosphatase egg-3, and possibly egg-4 and egg-5. The polypeptide is LDL receptor repeat-containing protein egg-2 (Caenorhabditis elegans).